A 1144-amino-acid chain; its full sequence is Nitric oxide synthase, inducible (1144 aa).

A DINNN-motif; mediates interaction with SPSB1, SPSB2 and SPSB4 motif is present at residues 23-27; sequence DINNN. Residues 37 to 59 form a disordered region; that stretch reads SPTIQDDPKSHQNGSPQLLTGTA. Polar residues predominate over residues 47 to 59; the sequence is HQNGSPQLLTGTA. Positions 104 and 109 each coordinate Zn(2+). Residue Ser112 coordinates (6R)-L-erythro-5,6,7,8-tetrahydrobiopterin. Cys194 lines the heme b pocket. Residues Gln257, Trp366, Tyr367, and Glu371 each contribute to the L-arginine site. (6R)-L-erythro-5,6,7,8-tetrahydrobiopterin is bound by residues Arg375, Ile456, Trp457, and Phe470. Tyr485 is a binding site for heme b. Residues 509–529 form a calmodulin-binding region; the sequence is FRVLVKVVFFASMLMRKVMAS. The Flavodoxin-like domain maps to 533 to 671; it reads ATVLFATETG…AFRSWAVQTF (139 aa). 5 residues coordinate FMN: Thr539, Glu540, Thr541, Lys543, and Ser544. Position 569 is a phosphotyrosine (Tyr569). The FMN site is built by Ser585, Thr586, Ser622, Cys629, Glu655, and Gln659. The FAD-binding FR-type domain maps to 724-964; sequence KNVFTMRLKS…VRSVSGFQLP (241 aa). An NADP(+)-binding site is contributed by Arg744. FAD contacts are provided by His766, Arg900, Tyr902, Ser903, Thr918, and Ala920. Thr923 lines the NADP(+) pocket. Positions 924, 937, 938, and 939 each coordinate FAD. NADP(+) contacts are provided by Thr978, Arg1011, Ser1040, Arg1041, Lys1047, Tyr1049, Gln1051, and Asp1084.

This sequence belongs to the NOS family. In terms of assembly, homodimer. Interacts with NHERF1. Interacts with GAPDH. Interacts with S100A8 and S100A9 to form the iNOS-S100A8/9 transnitrosylase complex. Interacts with SPSB1, SPSB2 and SPSB4. Interacts with ELOC and CUL5 in the presence of SPSB1 or SPSB2 or SPSB4. Forms a complex with ASL, ASS1 and HSP90AA1; the complex regulates cell-autonomous L-arginine synthesis and citrulline recycling while channeling extracellular L-arginine to nitric oxide synthesis pathway. Heme b is required as a cofactor. FAD serves as cofactor. The cofactor is FMN. It depends on (6R)-L-erythro-5,6,7,8-tetrahydrobiopterin as a cofactor. Post-translationally, polyubiquitinated; mediated by SPSB1, SPSB2 and SPSB4, leading to proteasomal degradation. As to expression, macrophages.

Its subcellular location is the cytoplasm. The protein localises to the cytosol. The enzyme catalyses 2 L-arginine + 3 NADPH + 4 O2 + H(+) = 2 L-citrulline + 2 nitric oxide + 3 NADP(+) + 4 H2O. Its activity is regulated as follows. Not stimulated by calcium/calmodulin. Aspirin inhibits expression and function of this enzyme and effects may be exerted at the level of translational/post-translational modification and directly on the catalytic activity. In terms of biological role, produces nitric oxide (NO) which is a messenger molecule with diverse functions throughout the body. In macrophages, NO mediates tumoricidal and bactericidal actions. Also has nitrosylase activity and mediates cysteine S-nitrosylation of cytoplasmic target proteins such PTGS2/COX2. As component of the iNOS-S100A8/9 transnitrosylase complex involved in the selective inflammatory stimulus-dependent S-nitrosylation of GAPDH implicated in regulation of the GAIT complex activity and probably multiple targets including ANXA5, EZR, MSN and VIM. Involved in inflammation, enhances the synthesis of pro-inflammatory mediators such as IL6 and IL8. In Mus musculus (Mouse), this protein is Nitric oxide synthase, inducible (Nos2).